Consider the following 239-residue polypeptide: Purine nucleoside phosphorylase DeoD-type (239 aa).

H5 lines the a purine D-ribonucleoside pocket. Residues G21, R25, R44, and 88–91 (RVGS) contribute to the phosphate site. A purine D-ribonucleoside is bound by residues 180-182 (EME) and 204-205 (SD). D205 serves as the catalytic Proton donor.

It belongs to the PNP/UDP phosphorylase family. In terms of assembly, homohexamer; trimer of homodimers.

The enzyme catalyses a purine D-ribonucleoside + phosphate = a purine nucleobase + alpha-D-ribose 1-phosphate. The catalysed reaction is a purine 2'-deoxy-D-ribonucleoside + phosphate = a purine nucleobase + 2-deoxy-alpha-D-ribose 1-phosphate. Functionally, catalyzes the reversible phosphorolytic breakdown of the N-glycosidic bond in the beta-(deoxy)ribonucleoside molecules, with the formation of the corresponding free purine bases and pentose-1-phosphate. This Yersinia pseudotuberculosis serotype O:1b (strain IP 31758) protein is Purine nucleoside phosphorylase DeoD-type.